The following is an 87-amino-acid chain: Prohibitin 1 (87 aa).

Threonine 8 carries the post-translational modification Phosphothreonine. At lysine 62 the chain carries N6-acetyllysine. Position 83 is a phosphotyrosine (tyrosine 83).

It belongs to the prohibitin family. As to quaternary structure, the mitochondrial prohibitin complex consists of two subunits (PHB1 and PHB2), assembled into a membrane-associated ring-shaped supercomplex of approximately 1 mDa. Interacts with STOML2. Interacts with MAP1LC3B (membrane-bound form LC3-II); the interaction requires PHB2 and takes place upon Parkin-mediated mitochondrial damage. Interacts with STAT3 (unphosphorylated or phosphorylated at 'Ser-727'). Interacts with CLPB. Interacts with CD86 (via cytoplasmic domain); the interactions increases after priming with CD40.

The protein resides in the mitochondrion inner membrane. It is found in the nucleus. It localises to the cytoplasm. The protein localises to the cell membrane. Functionally, protein with pleiotropic attributes mediated in a cell-compartment- and tissue-specific manner, which include the plasma membrane-associated cell signaling functions, mitochondrial chaperone, and transcriptional co-regulator of transcription factors in the nucleus. Plays a role in adipose tissue and glucose homeostasis in a sex-specific manner. Contributes to pulmonary vascular remodeling by accelerating proliferation of pulmonary arterial smooth muscle cells. In terms of biological role, in the mitochondria, together with PHB2, forms large ring complexes (prohibitin complexes) in the inner mitochondrial membrane (IMM) and functions as a chaperone protein that stabilizes mitochondrial respiratory enzymes and maintains mitochondrial integrity in the IMM, which is required for mitochondrial morphogenesis, neuronal survival, and normal lifespan. The prohibitin complex, with DNAJC19, regulates cardiolipin remodeling and the protein turnover of OMA1 in a cardiolipin-binding manner. Regulates mitochondrial respiration activity playing a role in cellular aging. The prohibitin complex plays a role of mitophagy receptor involved in targeting mitochondria for autophagic degradation. Involved in mitochondrial-mediated antiviral innate immunity, activates RIG-I-mediated signal transduction and production of IFNB1 and proinflammatory cytokine IL6. In the nucleus, acts as a transcription coregulator, enhances promoter binding by TP53, a transcription factor it activates, but reduces the promoter binding by E2F1, a transcription factor it represses. Interacts with STAT3 to affect IL17 secretion in T-helper Th17 cells. Its function is as follows. In the plasma membrane, cooperates with CD86 to mediate CD86-signaling in B lymphocytes that regulates the level of IgG1 produced through the activation of distal signaling intermediates. Upon CD40 engagement, required to activate NF-kappa-B signaling pathway via phospholipase C and protein kinase C activation. The protein is Prohibitin 1 (PHB1) of Mesocricetus auratus (Golden hamster).